The following is a 501-amino-acid chain: Proline--tRNA ligase (501 aa).

It belongs to the class-II aminoacyl-tRNA synthetase family.

It catalyses the reaction tRNA(Pro) + L-proline + ATP = L-prolyl-tRNA(Pro) + AMP + diphosphate. The polypeptide is Proline--tRNA ligase (Encephalitozoon cuniculi (strain GB-M1) (Microsporidian parasite)).